Reading from the N-terminus, the 56-residue chain is TauPI-stichotoxin-Hcr2d (56 aa).

One can recognise a BPTI/Kunitz inhibitor domain in the interval 4 to 54 (CLEPKVVGPCTAYFPRFYFNSETGKCTPFIYGGCEGNGNNFETLRACRGIC). Intrachain disulfides connect Cys-4/Cys-54, Cys-13/Cys-37, and Cys-29/Cys-50.

This sequence belongs to the venom Kunitz-type family. Sea anemone type 2 potassium channel toxin subfamily.

The protein localises to the secreted. It localises to the nematocyst. In terms of biological role, this protease inhibitor shows two different activities, it inhibits both the capsaicin receptor TRPV1 and serine proteases. It partially blocks the capsaicin- and acid-induced response of TRPV1, a receptor of the pain pathway. It also weakly inhibits trypsin and chymotrypsin activity (Ki=0.5 uM and Ki=7 uM, respectively). In addition, it may also alter tachykinin levels by suppressing endogenous proteases. In vivo, it shows antinociceptive and analgesic activities. It significantly prolongs paw withdrawal latency and blocks heat-induced and chemical-induced acute pain. In addition, it also shows anti-inflammatory and analgesic effects in models of osteoarthritis and rheumatoid arthritis. In vivo, unlike other TRPV1 antagonists whose activity is associated with hyperthermia, this protein has the remarkable feature of dropping core body temperature. In Radianthus crispa (Leathery sea anemone), this protein is TauPI-stichotoxin-Hcr2d.